The sequence spans 130 residues: MAENQYYGTGRRKSSAARVFIKPGSGEIVINKRSLDVYFGRPTSRMVVKQPLELVELTEKLDLYITVSGGGISGQAGAIRHGITRALMEYDETLRPALRAAGYVTRDARCVERKKVGLRKARRKPQFSKR.

This sequence belongs to the universal ribosomal protein uS9 family.

The sequence is that of Small ribosomal subunit protein uS9 from Vibrio atlanticus (strain LGP32) (Vibrio splendidus (strain Mel32)).